Reading from the N-terminus, the 618-residue chain is Nuclear RNA export factor 1 (618 aa).

Over residues 1-15 (MADEGKSYNEHDDRV) the composition is skewed to basic and acidic residues. The disordered stretch occupies residues 1-113 (MADEGKSYNE…RGGAGTSQDG (113 aa)). A2 bears the N-acetylalanine mark. A minor non-specific RNA-binding region spans residues 2-59 (ADEGKSYNEHDDRVSFPQRRKKGRGPFRWKCGVGNRRSGRGGSGIRSSRFEEDDGDVA). An RNA-binding (RBD) region spans residues 2-117 (ADEGKSYNEH…GTSQDGTTKN (116 aa)). The interval 2–197 (ADEGKSYNEH…IIINSSAPPY (196 aa)) is interaction with ALYREF/THOC4 and LUZP4. A compositionally biased stretch (basic residues) spans 19–28 (QRRKKGRGPF). R41 carries the post-translational modification Asymmetric dimethylarginine; alternate. An Omega-N-methylarginine; alternate modification is found at R41. The tract at residues 60–117 (MNDPQDGPRVRFNPYTTRPNRRRDTWHDRDRIHVTVRRDRAPQERGGAGTSQDGTTKN) is major non-specific RNA-binding. The segment at 60–117 (MNDPQDGPRVRFNPYTTRPNRRRDTWHDRDRIHVTVRRDRAPQERGGAGTSQDGTTKN) is RNA binding. Positions 66–99 (GPRVRFNPYTTRPNRRRDTWHDRDRIHVTVRRDR) match the Nuclear localization signal motif. Residues 81 to 102 (RRDTWHDRDRIHVTVRRDRAPQ) are compositionally biased toward basic and acidic residues. The Nuclear export signal motif lies at 82–109 (RDTWHDRDRIHVTVRRDRAPQERGGAGT). The RRM domain occupies 118–197 (WFKITIPYGK…IIINSSAPPY (80 aa)). The residue at position 125 (Y125) is a 3'-nitrotyrosine. 4 LRR repeats span residues 265-290 (ELLS…QKAP), 291-314 (NLKI…IKGL), 315-342 (KLEE…TIRE), and 343-370 (RFPK…TMLP). Positions 385–535 (LVLHFLQQYY…LCIVNDELFV (151 aa)) constitute an NTF2 domain. In terms of domain architecture, TAP-C spans 564–618 (QEQQDMLQAFSTQSGMNLEWSQKCLQDNNWDYTRSAQAFTHLKAKGEIPEVAFMK).

The protein belongs to the NXF family. Heterodimer (via NTF2 domain) with NXT1. The formation of NXF1-NXT1 heterodimers is required for the NXF1-mediated nuclear mRNA export. Forms a complex with RANBP2/NUP358, NXT1 and RANGAP1. Associates with the exon junction complex (EJC). Associates with the transcription/export (TREX) complex. Found in a mRNA complex with UPF3A and UPF3B. Found in a post-splicing complex with RBM8A, UPF1, UPF2, UPF3A, UPF3B and RNPS1. Interacts (via N-terminus) with DHX9 (via N-terminus); this interaction is direct and negatively regulates NXF1-mediated nuclear export of constitutive transport element (CTE)-containing cellular mRNAs. Interacts with FYTTD1/UIF. Interacts with EIF4A3. Interacts with NUP42. Interacts with ALYREF/THOC4. Interacts with CHTOP. Interacts with FRG1 (via N-terminus). Interacts with LUZP4. Interacts with FMR1; the interaction occurs in a mRNA-dependent and polyribosomes-independent manner in the nucleus. Interacts with CPSF6 (via N-terminus); this interaction is direct. Interacts with RBM15. Interacts with RBM15B. Interacts with MCM3AP; this interaction is not mediated by RNA. Interacts with DDX3X (via C-terminus); this interaction may be partly involved in DDX3X nuclear export and in NXF1 localization to stress granules. Interacts with PABPC1/PABP1.

The protein resides in the nucleus. The protein localises to the nucleoplasm. It is found in the nucleus speckle. Its subcellular location is the nuclear pore complex. It localises to the nucleus envelope. The protein resides in the cytoplasm. The protein localises to the stress granule. Involved in the nuclear export of mRNA species bearing retroviral constitutive transport elements (CTE) and in the export of mRNA from the nucleus to the cytoplasm (TAP/NFX1 pathway). The NXF1-NXT1 heterodimer is involved in the export of HSP70 mRNA in conjunction with ALYREF/THOC4 and THOC5 components of the TREX complex. ALYREF/THOC4-bound mRNA is thought to be transferred to the NXF1-NXT1 heterodimer for export. Also involved in nuclear export of m6A-containing mRNAs: interaction between SRSF3 and YTHDC1 facilitates m6A-containing mRNA-binding to both SRSF3 and NXF1, promoting mRNA nuclear export. This Rattus norvegicus (Rat) protein is Nuclear RNA export factor 1 (Nxf1).